The chain runs to 398 residues: Transcription factor kk1f (398 aa).

The tract at residues 1–28 (MTFVETVAVPDNEERPSAGHNRPVADST) is disordered. In terms of domain architecture, bZIP spans 31-62 (PNAREMKVQNRVAQRTHHRRLKTKLEVLRERL). The interval 34–50 (REMKVQNRVAQRTHHRR) is basic motif. The segment at 51–58 (LKTKLEVL) is leucine-zipper.

The protein belongs to the bZIP family.

It localises to the nucleus. Its pathway is secondary metabolite biosynthesis. In terms of biological role, transcription factor; part of the gene cluster that mediates the biosynthesis of KK-1, a novel cyclic depsipeptide with 10 residues which is a promising active compound with high activity against many plant pathogens, especially Botrytis cinerea. Positively regulates the expression of all the genes from the KK-1 biosynthesis gene cluster. This Curvularia clavata protein is Transcription factor kk1f.